Consider the following 158-residue polypeptide: Ethylene-responsive transcription factor ERF120 (158 aa).

Positions 86-147 (KHKGVRKKPS…SARRGTKNGE (62 aa)) form a DNA-binding region, AP2/ERF. The tract at residues 134-158 (VGRRSARRGTKNGEEASTKKTTEKN) is disordered. The segment covering 144-158 (KNGEEASTKKTTEKN) has biased composition (basic and acidic residues).

The protein belongs to the AP2/ERF transcription factor family. ERF subfamily.

It is found in the nucleus. In terms of biological role, probably acts as a transcriptional activator. Binds to the GCC-box pathogenesis-related promoter element. May be involved in the regulation of gene expression by stress factors and by components of stress signal transduction pathways. The polypeptide is Ethylene-responsive transcription factor ERF120 (ERF120) (Arabidopsis thaliana (Mouse-ear cress)).